We begin with the raw amino-acid sequence, 478 residues long: G2/mitotic-specific cyclin-B (478 aa).

The interval Met-1–Arg-153 is disordered. Over residues Ala-16 to Ala-31 the composition is skewed to low complexity. Over residues Asp-65–Lys-74 the composition is skewed to basic and acidic residues. A compositionally biased stretch (polar residues) spans Ser-77 to Arg-102. The span at Asn-110–Arg-121 shows a compositional bias: basic and acidic residues. Over residues Lys-133–Thr-145 the composition is skewed to polar residues.

This sequence belongs to the cyclin family. Cyclin AB subfamily.

Essential for the control of the cell cycle at the G2/M (mitosis) transition. Interacts with the CDC2 protein kinase to form MPF. G2/M cyclins accumulate steadily during G2 and are abruptly destroyed at mitosis. The sequence is that of G2/mitotic-specific cyclin-B (nimE) from Emericella nidulans (strain FGSC A4 / ATCC 38163 / CBS 112.46 / NRRL 194 / M139) (Aspergillus nidulans).